Reading from the N-terminus, the 112-residue chain is Hydrogenase maturation factor HypA (112 aa).

A Ni(2+)-binding site is contributed by H2. 4 residues coordinate Zn(2+): C73, C76, C88, and C91.

This sequence belongs to the HypA/HybF family.

Involved in the maturation of [NiFe] hydrogenases. Required for nickel insertion into the metal center of the hydrogenase. This is Hydrogenase maturation factor HypA from Synechococcus elongatus (strain ATCC 33912 / PCC 7942 / FACHB-805) (Anacystis nidulans R2).